A 198-amino-acid polypeptide reads, in one-letter code: 8-oxoguanine DNA glycosylase/AP lyase (198 aa).

Catalysis depends on residues Lys122 and Asp140.

Belongs to the type-2 OGG1 family. Monomer.

The enzyme catalyses 2'-deoxyribonucleotide-(2'-deoxyribose 5'-phosphate)-2'-deoxyribonucleotide-DNA = a 3'-end 2'-deoxyribonucleotide-(2,3-dehydro-2,3-deoxyribose 5'-phosphate)-DNA + a 5'-end 5'-phospho-2'-deoxyribonucleoside-DNA + H(+). In terms of biological role, catalyzes the excision of an oxidatively damaged form of guanine (7,8-dihydro-8-oxoguanine = 8-oxoG) from DNA. Also cleaves the DNA backbone at apurinic/apyrimidinic sites (AP sites). Efficiently cleaves oligomers containing 8-oxoG:C and 8-oxoG:G base pairs, and is less effective on oligomers containing 8-oxoG:T and 8-oxoG:A mispairs. The chain is 8-oxoguanine DNA glycosylase/AP lyase from Archaeoglobus fulgidus (strain ATCC 49558 / DSM 4304 / JCM 9628 / NBRC 100126 / VC-16).